Consider the following 153-residue polypeptide: Putative tRNA (cytidine(34)-2'-O)-methyltransferase (153 aa).

3 residues coordinate S-adenosyl-L-methionine: Gly-102, Ile-122, and Ser-131.

This sequence belongs to the class IV-like SAM-binding methyltransferase superfamily. RNA methyltransferase TrmH family. TrmL subfamily.

It is found in the cytoplasm. The catalysed reaction is cytidine(34) in tRNA + S-adenosyl-L-methionine = 2'-O-methylcytidine(34) in tRNA + S-adenosyl-L-homocysteine + H(+). It carries out the reaction 5-carboxymethylaminomethyluridine(34) in tRNA(Leu) + S-adenosyl-L-methionine = 5-carboxymethylaminomethyl-2'-O-methyluridine(34) in tRNA(Leu) + S-adenosyl-L-homocysteine + H(+). In terms of biological role, could methylate the ribose at the nucleotide 34 wobble position in tRNA. The polypeptide is Putative tRNA (cytidine(34)-2'-O)-methyltransferase (Synechocystis sp. (strain ATCC 27184 / PCC 6803 / Kazusa)).